Here is a 373-residue protein sequence, read N- to C-terminus: MRTAILKKVKRIVIKIGSRVLTGDENGLNHAFIARLAAETASLRQQGRQVIVVSSGAVAAGRRELGIEGRPKSIPQKQAAAAIGQSRLMRAYEEDFGRFGHKVAQILLTRDDLANRRRFLNARATLDTLLDFGVIPVINENDTVVVDEIKFGDNDNLSALVTNLAEAHLLVILTDIDGFYDSDPRANPDARLIHLVKSITRETERAAGDSGSSVGTGGMVTKLAAAKKAGQFGVPTLMLNGTVPGILTKAFAGREVGTLFLPARESLNRRKHWIAHTLRPSGRVIVDDGARTVLSRQGKSLLPSGVIRVEGEFDRGACVRVCGADGAEIARGVVDYSHAEIERILGHRSGEIEAILGYKYGDEIIHRDNLVVL.

Position 15 (Lys-15) interacts with ATP. Substrate-binding residues include Ser-55, Asp-142, and Asn-154. ATP is bound by residues 174-175 and 216-222; these read TD and TGGMVTK. Positions 281 to 359 constitute a PUA domain; that stretch reads SGRVIVDDGA…GEIEAILGYK (79 aa).

It belongs to the glutamate 5-kinase family.

It localises to the cytoplasm. The enzyme catalyses L-glutamate + ATP = L-glutamyl 5-phosphate + ADP. The protein operates within amino-acid biosynthesis; L-proline biosynthesis; L-glutamate 5-semialdehyde from L-glutamate: step 1/2. Catalyzes the transfer of a phosphate group to glutamate to form L-glutamate 5-phosphate. The protein is Glutamate 5-kinase of Geobacter metallireducens (strain ATCC 53774 / DSM 7210 / GS-15).